The chain runs to 668 residues: NADH-ubiquinone oxidoreductase chain 5 (668 aa).

18 helical membrane passes run 1–21 (MYII…LFGH), 31–51 (IAVG…YEIL), 81–101 (LTSI…LYSM), 111–131 (TRFF…VTAD), 133–153 (FVQL…LINF), 178–198 (LFFG…SVIF), 211–231 (LLGY…IGVV), 251–271 (TPVS…FLVL), 283–303 (ILNI…TIGI), 311–331 (VIAY…GLLN), 339–359 (LTTH…VIHG), 375–395 (LMPL…GFPF), 421–441 (AIIG…LLIL), 462–482 (TNMV…GYLT), 519–539 (LLPL…YFNL), 566–586 (FDFL…YDVM), 629–649 (IVQA…IGFL), and 650–668 (YVEL…PKIK).

This sequence belongs to the complex I subunit 5 family.

Its subcellular location is the mitochondrion inner membrane. The catalysed reaction is a ubiquinone + NADH + 5 H(+)(in) = a ubiquinol + NAD(+) + 4 H(+)(out). Functionally, core subunit of the mitochondrial membrane respiratory chain NADH dehydrogenase (Complex I) that is believed to belong to the minimal assembly required for catalysis. Complex I functions in the transfer of electrons from NADH to the respiratory chain. The immediate electron acceptor for the enzyme is believed to be ubiquinone. The polypeptide is NADH-ubiquinone oxidoreductase chain 5 (nad5) (Dictyostelium citrinum (Slime mold)).